The chain runs to 156 residues: Ribosomal RNA large subunit methyltransferase H (156 aa).

Residues leucine 73, glycine 104, and 123–128 (VSSLTL) contribute to the S-adenosyl-L-methionine site.

Belongs to the RNA methyltransferase RlmH family. As to quaternary structure, homodimer.

It is found in the cytoplasm. It carries out the reaction pseudouridine(1915) in 23S rRNA + S-adenosyl-L-methionine = N(3)-methylpseudouridine(1915) in 23S rRNA + S-adenosyl-L-homocysteine + H(+). In terms of biological role, specifically methylates the pseudouridine at position 1915 (m3Psi1915) in 23S rRNA. This is Ribosomal RNA large subunit methyltransferase H from Paraburkholderia phytofirmans (strain DSM 17436 / LMG 22146 / PsJN) (Burkholderia phytofirmans).